Reading from the N-terminus, the 44-residue chain is Putative keratin-associated protein 20-4 (44 aa).

Belongs to the KRTAP type 20 family. In terms of assembly, interacts with hair keratins.

In the hair cortex, hair keratin intermediate filaments are embedded in an interfilamentous matrix, consisting of hair keratin-associated proteins (KRTAP), which are essential for the formation of a rigid and resistant hair shaft through their extensive disulfide bond cross-linking with abundant cysteine residues of hair keratins. The matrix proteins include the high-sulfur and high-glycine-tyrosine keratins. The sequence is that of Putative keratin-associated protein 20-4 (KRTAP20-4) from Homo sapiens (Human).